The following is a 189-amino-acid chain: Potassium-transporting ATPase KdpC subunit (189 aa).

The chain crosses the membrane as a helical span at residues 6–26; it reads PAILMLIIFTILCGGIYPAVV.

It belongs to the KdpC family. The system is composed of three essential subunits: KdpA, KdpB and KdpC.

Its subcellular location is the cell inner membrane. Its function is as follows. Part of the high-affinity ATP-driven potassium transport (or Kdp) system, which catalyzes the hydrolysis of ATP coupled with the electrogenic transport of potassium into the cytoplasm. This subunit acts as a catalytic chaperone that increases the ATP-binding affinity of the ATP-hydrolyzing subunit KdpB by the formation of a transient KdpB/KdpC/ATP ternary complex. The sequence is that of Potassium-transporting ATPase KdpC subunit from Geobacter sulfurreducens (strain ATCC 51573 / DSM 12127 / PCA).